A 590-amino-acid polypeptide reads, in one-letter code: Acetolactate synthase large subunit (590 aa).

Glu61 contributes to the thiamine diphosphate binding site. FAD is bound by residues Arg163, 271–292, and 314–333; these read HGTAYANFAVSECDLLIALGAR and DIDPAEVGKNRIPQVAIVGD. The tract at residues 405–484 is thiamine pyrophosphate binding; sequence QHQMWSAQFL…IKIVIINNRW (80 aa). Residues Asp455 and Asn482 each coordinate Mg(2+).

The protein belongs to the TPP enzyme family. As to quaternary structure, dimer of large and small chains. Mg(2+) is required as a cofactor. It depends on thiamine diphosphate as a cofactor.

It localises to the plastid. Its subcellular location is the chloroplast. It carries out the reaction 2 pyruvate + H(+) = (2S)-2-acetolactate + CO2. Its pathway is amino-acid biosynthesis; L-isoleucine biosynthesis; L-isoleucine from 2-oxobutanoate: step 1/4. It functions in the pathway amino-acid biosynthesis; L-valine biosynthesis; L-valine from pyruvate: step 1/4. The protein is Acetolactate synthase large subunit (ilvB) of Porphyra purpurea (Red seaweed).